The sequence spans 20 residues: Basic phospholipase A2 cannitoxin alpha chain (20 aa).

As to quaternary structure, heterotrimer of alpha, beta, and gamma chains; non-covalently linked. Ca(2+) serves as cofactor. Expressed by the venom gland.

The protein localises to the secreted. The enzyme catalyses a 1,2-diacyl-sn-glycero-3-phosphocholine + H2O = a 1-acyl-sn-glycero-3-phosphocholine + a fatty acid + H(+). Its function is as follows. Heterotrimer: Snake venom phospholipase A2 (PLA2) heterotrimer that acts as a potent presynaptic neurotoxin by blocking synaptic transmission and synaptic vesicle recycling. Enzymatic activity is essential for the neurotoxic effects. May act by binding in a calcium-dependent fashion to neurotonal pentraxin-1 (NPTX1) and neurotonal pentraxin-2 (NPTX2), but not to neuronal pentraxin receptor (NPTXR). Also binds to taipoxin-associated calcium binding protein 49 (RCN2), a protein localized in the lumen of endoplasmic reticulum. Functionally, monomer (alpha chain): Snake venom phospholipase A2 (PLA2) that possesses a low level of presynaptic activity and the same high enzymatic activity than the heterotrimer. PLA2 catalyzes the calcium-dependent hydrolysis of the 2-acyl groups in 3-sn-phosphoglycerides. This Oxyuranus scutellatus canni (Papuan taipan) protein is Basic phospholipase A2 cannitoxin alpha chain.